The sequence spans 1380 residues: DNA-directed RNA polymerase subunit beta (1380 aa).

It belongs to the RNA polymerase beta chain family. As to quaternary structure, the RNAP catalytic core consists of 2 alpha, 1 beta, 1 beta' and 1 omega subunit. When a sigma factor is associated with the core the holoenzyme is formed, which can initiate transcription.

It catalyses the reaction RNA(n) + a ribonucleoside 5'-triphosphate = RNA(n+1) + diphosphate. Functionally, DNA-dependent RNA polymerase catalyzes the transcription of DNA into RNA using the four ribonucleoside triphosphates as substrates. The polypeptide is DNA-directed RNA polymerase subunit beta (Nitrobacter winogradskyi (strain ATCC 25391 / DSM 10237 / CIP 104748 / NCIMB 11846 / Nb-255)).